Here is a 190-residue protein sequence, read N- to C-terminus: Small ribosomal subunit protein eS7 (190 aa).

It belongs to the eukaryotic ribosomal protein eS7 family. Component of the small ribosomal subunit. Part of the small subunit (SSU) processome, composed of more than 70 proteins and the RNA chaperone small nucleolar RNA (snoRNA) U3.

It is found in the cytoplasm. It localises to the cytoskeleton. Its subcellular location is the microtubule organizing center. The protein localises to the centrosome. The protein resides in the nucleus. It is found in the nucleolus. Functionally, component of the small ribosomal subunit. The ribosome is a large ribonucleoprotein complex responsible for the synthesis of proteins in the cell. Required for rRNA maturation. Part of the small subunit (SSU) processome, first precursor of the small eukaryotic ribosomal subunit. During the assembly of the SSU processome in the nucleolus, many ribosome biogenesis factors, an RNA chaperone and ribosomal proteins associate with the nascent pre-rRNA and work in concert to generate RNA folding, modifications, rearrangements and cleavage as well as targeted degradation of pre-ribosomal RNA by the RNA exosome. In Spodoptera frugiperda (Fall armyworm), this protein is Small ribosomal subunit protein eS7 (RpS7).